Reading from the N-terminus, the 138-residue chain is Large ribosomal subunit protein uL16 (138 aa).

Over residues 1-13 (MLQPARRKYRKEQ) the composition is skewed to basic residues. Residues 1–22 (MLQPARRKYRKEQKGRNTGVAT) are disordered.

It belongs to the universal ribosomal protein uL16 family. In terms of assembly, part of the 50S ribosomal subunit.

Functionally, binds 23S rRNA and is also seen to make contacts with the A and possibly P site tRNAs. This Paracidovorax citrulli (strain AAC00-1) (Acidovorax citrulli) protein is Large ribosomal subunit protein uL16.